The primary structure comprises 125 residues: Multifunctional methyltransferase subunit TRM112-like protein (125 aa).

Residues K2–S119 form the TRM112 domain. Residues S119 and S125 each carry the phosphoserine modification.

Belongs to the TRM112 family. Part of the heterodimeric BUD23-TRM112 methyltransferase complex; this heterodimerization is necessary for the metabolic stability and activity of the catalytic subunit BUD23. Part of the heterodimeric N6AMT1-TRM112 methyltransferase complex; this heterodimerization is necessary for S-adenosyl-L-methionine-binding to N6AMT1/HEMK2. Part of the heterodimeric ALKBH8-TRM112 methyltransferase complex. Part of the heterodimeric METTL5-TRM112 methyltransferase complex; this heterodimerization is necessary for the stability of the catalytic subunit METTL5. Part of the heterodimeric THUMPD3-TRM112 methyltransferase complex; this complex forms an active tRNA methyltransferase, where TRMT112 acts as an activator of the catalytic subunit THUMPD3. Part of the heterodimeric THUMPD2-TRM112 methyltransferase complex; this complex forms an active tRNA methyltransferase, where TRMT112 acts as an activator of the catalytic subunit THUMPD2. Part of the heterodimeric TRMT11-TRM112 methyltransferase complex; this complex forms an active tRNA methyltransferase, where TRMT112 acts as an activator of the catalytic subunit TRMT11.

The protein resides in the nucleus. Its subcellular location is the nucleoplasm. It localises to the cytoplasm. It is found in the perinuclear region. In terms of biological role, acts as an activator of both rRNA/tRNA and protein methyltransferases. Together with methyltransferase BUD23, methylates the N(7) position of a guanine in 18S rRNA. The heterodimer with N6AMT1/HEMK2 catalyzes N5-methylation of ETF1 on 'Gln-185', using S-adenosyl L-methionine as methyl donor. The heterodimer with N6AMT1/HEMK2 also monomethylates 'Lys-12' of histone H4 (H4K12me1). The heterodimer with ALKBH8 catalyzes the methylation of 5-carboxymethyl uridine to 5-methylcarboxymethyl uridine at the wobble position of the anticodon loop in target tRNA species. Together with methyltransferase THUMPD3, catalyzes the formation of N(2)-methylguanosine at position 6 in a broad range of tRNA substrates and at position 7 of tRNA(Trp). Involved in the pre-rRNA processing steps leading to small-subunit rRNA production. Together with methyltransferase METTL5, specifically methylates the 6th position of adenine in position 1832 of 18S rRNA. The protein is Multifunctional methyltransferase subunit TRM112-like protein of Homo sapiens (Human).